Reading from the N-terminus, the 124-residue chain is Small ribosomal subunit protein bS6 (124 aa).

Residues 98–124 form a disordered region; that stretch reads EASPMLKAREERPRREDVREEAEEAAE. Positions 104 to 115 are enriched in basic and acidic residues; sequence KAREERPRREDV.

It belongs to the bacterial ribosomal protein bS6 family.

Binds together with bS18 to 16S ribosomal RNA. The chain is Small ribosomal subunit protein bS6 from Tolumonas auensis (strain DSM 9187 / NBRC 110442 / TA 4).